The primary structure comprises 335 residues: MKAPVRVAVTGAAGQIGYALLFRIASGAMLGADQPVILQLLEIPDEKAQKALKGVMMELEDCAFPLLHSMIATGDPAVAFKDADVALLVGARPRGPGMERKDLLTANGQIFTVQGEAIGKYANPNVKVLVVGNPANTNAYIAMKSAMKHGRVKAKNFTAMLRLDHNRALSQLATKTGKPVASFKKVAVWGNHSPTMYPDVRFATADGAKVPELLKLGTAEGDAWNKDTFIPTVGKRGAAIIEARGLSSAASAASAAVDHIRDWWLGTNGEWVTMGIPSDGSYDIPEGIMYGFPVTCKNGEYEIVKGLEIDAFSREKMNNTLKELNEEKDAVASML.

Residue G11 to G17 coordinates NAD(+). 2 residues coordinate substrate: R94 and R100. NAD(+)-binding positions include N107, Q114, and V131 to N133. The substrate site is built by N133 and R167. Residue H192 is the Proton acceptor of the active site.

The protein belongs to the LDH/MDH superfamily. MDH type 2 family.

The catalysed reaction is (S)-malate + NAD(+) = oxaloacetate + NADH + H(+). Catalyzes the reversible oxidation of malate to oxaloacetate. This chain is Malate dehydrogenase, found in Bdellovibrio bacteriovorus (strain ATCC 15356 / DSM 50701 / NCIMB 9529 / HD100).